The following is a 300-amino-acid chain: Small ribosomal subunit protein uS2 (300 aa).

Residues 278 to 300 form a disordered region; it reads GEAQTGNEGWGTEAAAPAATTQW.

It belongs to the universal ribosomal protein uS2 family. As to quaternary structure, component of the small ribosomal subunit. Mature ribosomes consist of a small (40S) and a large (60S) subunit. The 40S subunit contains about 33 different proteins and 1 molecule of RNA (18S). The 60S subunit contains about 49 different proteins and 3 molecules of RNA (25S, 5.8S and 5S). Interacts with rps21.

The protein localises to the cytoplasm. Its function is as follows. Required for the assembly and/or stability of the 40S ribosomal subunit. Required for the processing of the 20S rRNA-precursor to mature 18S rRNA in a late step of the maturation of 40S ribosomal subunits. The chain is Small ribosomal subunit protein uS2 (rps0) from Pyrenophora tritici-repentis (strain Pt-1C-BFP) (Wheat tan spot fungus).